A 66-amino-acid chain; its full sequence is Large ribosomal subunit protein bL35 (66 aa).

The span at 1-26 shows a compositional bias: basic residues; the sequence is MPKMKTHRGSAKRFKKTASGKLKRGH. The interval 1–28 is disordered; sequence MPKMKTHRGSAKRFKKTASGKLKRGHAY.

The protein belongs to the bacterial ribosomal protein bL35 family.

This Geobacillus thermodenitrificans (strain NG80-2) protein is Large ribosomal subunit protein bL35.